A 173-amino-acid polypeptide reads, in one-letter code: MSTSAVLFLLLAVFAAGASAATFNIKNNCGSTIWPAGIPVGGGFELGSGQTSSINVPAGTQAGRIWARTGCSFNGGSGSCQTGDCGGQLSCSLSGQPPATLAEFTIGGGSTQDFYDISVIDGFNLAMDFSCSTGDALQCRDPSCPPPQAYQHPNDVATHACSGNNNYQITFCP.

Residues 1–20 form the signal peptide; sequence MSTSAVLFLLLAVFAAGASA.

Belongs to the thaumatin family.

The chain is Pathogenesis-related protein 1A/1B from Hordeum vulgare (Barley).